Reading from the N-terminus, the 707-residue chain is Nucleolin 2 (707 aa).

The disordered stretch occupies residues 1–446 (MGKSSKKSAV…TPASNQNQAT (446 aa)). Composition is skewed to basic and acidic residues over residues 30-40 (RNAEDEIEKAV) and 47-60 (TVRE…EEAK). Composition is skewed to acidic residues over residues 75–85 (SSEEDSSESEE), 108–120 (SSDD…SSDD), and 144–153 (DSSDESLSDD). Positions 158-170 (KPAAPLKKPVALA) are enriched in low complexity. Acidic residues-rich tracts occupy residues 219-232 (DSSD…SDED), 248-263 (SESS…DDEA), and 271-287 (ESSD…SDSD). Residues 300–311 (LTKDTKKGQSKD) are compositionally biased toward basic and acidic residues. The segment covering 312–326 (ESEDSSDESSEESGD) has biased composition (acidic residues). Residues 336–347 (STTSGTTKPSPK) show a composition bias toward low complexity. Positions 355–370 (SDDESDEDDSSDESSD) are enriched in acidic residues. Residues 376 to 394 (KQTQAKKQAPVAQESSSSD) are compositionally biased toward low complexity. A compositionally biased stretch (acidic residues) spans 395 to 406 (ESSEEDSDMESD). The span at 407 to 417 (EPAKTPQKKET) shows a compositional bias: basic and acidic residues. Over residues 420 to 429 (SVGSNKSATK) the composition is skewed to polar residues. One can recognise an RRM 1 domain in the interval 449 to 525 (KTLFVGNLPY…RPVRLDLARE (77 aa)). 2 disordered regions span residues 527–546 (GAYT…PAQS) and 629–707 (RPRP…GDDD). The RRM 2 domain maps to 549–630 (NTIFIKGFDT…YSLYVDEARP (82 aa)). Residues 657 to 681 (GRGDGSRGRGDRGRGRGFGRGDRGH) are compositionally biased toward basic and acidic residues.

The protein localises to the nucleus. The protein resides in the nucleolus. Involved in pre-rRNA processing and ribosome assembly. The protein is Nucleolin 2 of Oryza sativa subsp. japonica (Rice).